The chain runs to 261 residues: Guanine nucleotide exchange factor BopE (261 aa).

Belongs to the GEF (guanine exchange factor) SopE family. Monomer. Interacts with human CDC42.

It localises to the secreted. In terms of biological role, activator for both CDC42 and RAC1 by directly interacting with these Rho GTPases and acting as a guanine nucleotide exchange factor (GEF). This activation results in actin cytoskeleton rearrangements and stimulates membrane ruffling, thus promoting bacterial entry into non-phagocytic cells. The polypeptide is Guanine nucleotide exchange factor BopE (bopE) (Burkholderia pseudomallei (strain 1710b)).